Here is a 1226-residue protein sequence, read N- to C-terminus: Receptor-type tyrosine-protein phosphatase O (1226 aa).

The N-terminal stretch at M1 to T29 is a signal peptide. In terms of domain architecture, Fibronectin type-III 1 spans F30 to L115. Topologically, residues F30 to V832 are extracellular. N-linked (GlcNAc...) asparagine glycans are attached at residues N75, N154, and N227. The segment at E242–S305 is disordered. Residues I260–E270 show a composition bias toward basic and acidic residues. Residues P277 to S291 show a composition bias toward low complexity. N-linked (GlcNAc...) asparagine glycosylation occurs at N279. The span at P296–S305 shows a compositional bias: polar residues. 5 consecutive Fibronectin type-III domains span residues R339–T435, K445–T541, G542–F638, A641–A734, and P735–N827. Residues N471 and N500 are each glycosylated (N-linked (GlcNAc...) asparagine). Residues N710, N743, and N800 are each glycosylated (N-linked (GlcNAc...) asparagine). The chain crosses the membrane as a helical span at residues I833 to I853. At L854 to S1226 the chain is on the cytoplasmic side. Phosphoserine is present on S875. The Tyrosine-protein phosphatase domain maps to F948 to M1205. Residues D1112, C1146 to R1152, and Q1190 contribute to the substrate site. Catalysis depends on C1146, which acts as the Phosphocysteine intermediate. Y1220 bears the Phosphotyrosine mark.

Belongs to the protein-tyrosine phosphatase family. Receptor class 3 subfamily. In terms of assembly, interacts (phosphorylated form) with FYN and GRB2.

Its subcellular location is the membrane. It catalyses the reaction O-phospho-L-tyrosyl-[protein] + H2O = L-tyrosyl-[protein] + phosphate. Possesses tyrosine phosphatase activity. Plays a role in regulating the glomerular pressure/filtration rate relationship through an effect on podocyte structure and function. The sequence is that of Receptor-type tyrosine-protein phosphatase O (Ptpro) from Mus musculus (Mouse).